Here is a 459-residue protein sequence, read N- to C-terminus: Ribosomal protein uS12 methylthiotransferase RimO (459 aa).

Positions 1 to 28 (MSTNPPDLRPDLAPKARLTQPDRPGQPT) are disordered. The region spanning 27-137 (PTIGMVSLGC…VLDAVHAAVP (111 aa)) is the MTTase N-terminal domain. Cys36, Cys72, Cys101, Cys168, Cys172, and Cys175 together coordinate [4Fe-4S] cluster. A Radical SAM core domain is found at 154 to 387 (LTPRHFSYLK…MAKSQDISEA (234 aa)). One can recognise a TRAM domain in the interval 390–457 (AAKVAQRLEV…EYDLWGRLAP (68 aa)).

Belongs to the methylthiotransferase family. RimO subfamily. The cofactor is [4Fe-4S] cluster.

It is found in the cytoplasm. It carries out the reaction L-aspartate(89)-[ribosomal protein uS12]-hydrogen + (sulfur carrier)-SH + AH2 + 2 S-adenosyl-L-methionine = 3-methylsulfanyl-L-aspartate(89)-[ribosomal protein uS12]-hydrogen + (sulfur carrier)-H + 5'-deoxyadenosine + L-methionine + A + S-adenosyl-L-homocysteine + 2 H(+). Its function is as follows. Catalyzes the methylthiolation of an aspartic acid residue of ribosomal protein uS12. The chain is Ribosomal protein uS12 methylthiotransferase RimO from Roseobacter denitrificans (strain ATCC 33942 / OCh 114) (Erythrobacter sp. (strain OCh 114)).